We begin with the raw amino-acid sequence, 647 residues long: Threonine--tRNA ligase (647 aa).

One can recognise a TGS domain in the interval 1–61 (MINITFPDGA…TEDGSIEIVT (61 aa)). The tract at residues 242–540 (DHRKLGKELD…LIENYKGAFP (299 aa)) is catalytic. Zn(2+)-binding residues include C336, H387, and H517.

It belongs to the class-II aminoacyl-tRNA synthetase family. As to quaternary structure, homodimer. Requires Zn(2+) as cofactor.

The protein localises to the cytoplasm. It catalyses the reaction tRNA(Thr) + L-threonine + ATP = L-threonyl-tRNA(Thr) + AMP + diphosphate + H(+). Its function is as follows. Catalyzes the attachment of threonine to tRNA(Thr) in a two-step reaction: L-threonine is first activated by ATP to form Thr-AMP and then transferred to the acceptor end of tRNA(Thr). Also edits incorrectly charged L-seryl-tRNA(Thr). The polypeptide is Threonine--tRNA ligase (Streptococcus pneumoniae serotype 4 (strain ATCC BAA-334 / TIGR4)).